The following is a 607-amino-acid chain: MTTQRNDNLEQPGRSVIFDDGLSATDTPNETNVVETEVLIVGSGPAGSSAAMFLSTQGISNIMITKYRWTANTPRAHITNQRTMEILRDAGIEDQVLAEAVPHELMGDTVYCESMAGEEIGRRPTWGTRPDRRADYELASPAMPCDIPQTLLEPIMLKNATMRGTQTQFSTEYLSHTQDDKGVSVQVLNRLTGQEYTIRAKYLIGADGARSKVAADIGGSMNITFKADLSHWRPSALDPVLGLPPRIEYRWPRRWFDRMVRPWNEWLVVWGFDINQEPPKLNDDEAIQIVRNLVGIEDLDVEILGYSLWGNNDQYATHLQKGRVCCAGDAIHKHPPSHGLGSNTSIQDSYNLCWKLACVLKGQAGPELLETYSTERAPIAKQIVTRANGSSSEYKPIFDALGVTDATTNDEFVEKLALRKENSPEGARRRAALRAALDNKDYEFNAQGTEIGQFYDSSAVITDGQKRPAMTEDPMLHHQKSTFPGLRLPHAWLGDAKEKYSTHDIAEGTRFTIFTGITGQAWADAAVRVAERLGIDLKAVVIGEGQPVQDLYGDWLRQREVDEDGVILVRPDKHIGWRAQSMVADPETALFDVLSGCCIPSKPALRI.

Positions 1 to 28 (MTTQRNDNLEQPGRSVIFDDGLSATDTP) are disordered. FAD-binding positions include 37-66 (EVLI…MITK) and 319-329 (LQKGRVCCAGD).

This sequence belongs to the PheA/TfdB FAD monooxygenase family. Requires FAD as cofactor.

The enzyme catalyses phenol + NADPH + O2 + H(+) = catechol + NADP(+) + H2O. It participates in aromatic compound metabolism; phenol degradation. In Pseudomonas sp. (strain EST1001), this protein is Phenol 2-monooxygenase (pheA).